Reading from the N-terminus, the 296-residue chain is MSAHIINGTEIAAAIREEIRSEVTALKAKHGIVPGLATVLVGDDPASHSYVDSKIKMCQNLGIYSEHHPLPQSATNEDLLTLIARLNADPKISGILVQVPLPVQISENLVLNAINPDKDVDGFHPVNVGRMCLGEPCFLPCTPHGVQELLIRSGIKIEGTHVVIVGRSNLVGKPLANILLQKAPGANATVTICHSGTKNLPLITSQADILVSAMGKPKFITADMVRQGAVVIDVGTTCIGYTPEGKRILSGDVDFEAVKEKAFAITPVPKGVGPMTIIMLMLNTLTAAKRAAGLVK.

NADP(+)-binding positions include 166–168 (GRS), Ser195, and Thr236.

The protein belongs to the tetrahydrofolate dehydrogenase/cyclohydrolase family. Homodimer.

The enzyme catalyses (6R)-5,10-methylene-5,6,7,8-tetrahydrofolate + NADP(+) = (6R)-5,10-methenyltetrahydrofolate + NADPH. The catalysed reaction is (6R)-5,10-methenyltetrahydrofolate + H2O = (6R)-10-formyltetrahydrofolate + H(+). The protein operates within one-carbon metabolism; tetrahydrofolate interconversion. Its function is as follows. Catalyzes the oxidation of 5,10-methylenetetrahydrofolate to 5,10-methenyltetrahydrofolate and then the hydrolysis of 5,10-methenyltetrahydrofolate to 10-formyltetrahydrofolate. This chain is Bifunctional protein FolD, found in Dehalococcoides mccartyi (strain ATCC BAA-2266 / KCTC 15142 / 195) (Dehalococcoides ethenogenes (strain 195)).